Here is a 305-residue protein sequence, read N- to C-terminus: Methionyl-tRNA formyltransferase (305 aa).

108-111 (SLLP) is a binding site for (6S)-5,6,7,8-tetrahydrofolate.

The protein belongs to the Fmt family.

It carries out the reaction L-methionyl-tRNA(fMet) + (6R)-10-formyltetrahydrofolate = N-formyl-L-methionyl-tRNA(fMet) + (6S)-5,6,7,8-tetrahydrofolate + H(+). Attaches a formyl group to the free amino group of methionyl-tRNA(fMet). The formyl group appears to play a dual role in the initiator identity of N-formylmethionyl-tRNA by promoting its recognition by IF2 and preventing the misappropriation of this tRNA by the elongation apparatus. This chain is Methionyl-tRNA formyltransferase, found in Clavibacter sepedonicus (Clavibacter michiganensis subsp. sepedonicus).